The primary structure comprises 386 residues: Histidine decarboxylase (386 aa).

H120 is a substrate binding site. K233 carries the N6-(pyridoxal phosphate)lysine modification.

The protein belongs to the group II decarboxylase family. Homotetramer. It depends on pyridoxal 5'-phosphate as a cofactor.

It catalyses the reaction L-histidine + H(+) = histamine + CO2. It functions in the pathway siderophore biosynthesis; anguibactin biosynthesis. The chain is Histidine decarboxylase from Vibrio anguillarum (strain ATCC 68554 / 775) (Listonella anguillarum).